We begin with the raw amino-acid sequence, 209 residues long: MGVHELTHPLVRHKIGLMREADISTKKFRELAAELARLLAYEACGDFPLEVRTITGWDGNPVEIEQIKGKKVTVVPILRAGIGMLDGVLDMIPNAKVSVVGLARNEETLEAHTYLEKFVDKLDERLAVILDPMLATGGSMEATISMLKRNGCRQIRVLALVAAPEGLARVTAAHPDVDIYVAAIDRCLNEHGYILPGLGDAGDKIFGTK.

5-phospho-alpha-D-ribose 1-diphosphate contacts are provided by residues R79, R104, and 131 to 139 (DPMLATGGS). Uracil-binding positions include I194 and 199–201 (GDA). D200 provides a ligand contact to 5-phospho-alpha-D-ribose 1-diphosphate.

It belongs to the UPRTase family. The cofactor is Mg(2+).

It catalyses the reaction UMP + diphosphate = 5-phospho-alpha-D-ribose 1-diphosphate + uracil. It functions in the pathway pyrimidine metabolism; UMP biosynthesis via salvage pathway; UMP from uracil: step 1/1. With respect to regulation, allosterically activated by GTP. In terms of biological role, catalyzes the conversion of uracil and 5-phospho-alpha-D-ribose 1-diphosphate (PRPP) to UMP and diphosphate. The chain is Uracil phosphoribosyltransferase from Geobacter sulfurreducens (strain ATCC 51573 / DSM 12127 / PCA).